We begin with the raw amino-acid sequence, 385 residues long: Centrosomal protein of 44 kDa (385 aa).

The segment at arginine 11–threonine 192 is binds with microtubules and centrioles. The disordered stretch occupies residues leucine 126–glutamate 154. Positions serine 139–glutamate 154 are enriched in polar residues. Residues glutamate 230 to lysine 271 are a coiled coil. The disordered stretch occupies residues serine 303–threonine 348. Residues aspartate 305 to serine 314 show a composition bias toward low complexity. Over residues asparagine 316 to alanine 327 the composition is skewed to basic and acidic residues. Low complexity predominate over residues serine 332–serine 342. At serine 342 the chain carries Phosphoserine. Threonine 343 carries the phosphothreonine modification. Residues serine 358–lysine 381 adopt a coiled-coil conformation.

Interacts with CROCC. Interacts with POC1B; the interaction is direct and recruits POC1B to centriolar microtubules. Binds to centriolar microtubules.

Its subcellular location is the cytoplasm. The protein resides in the cytoskeleton. It is found in the microtubule organizing center. The protein localises to the centrosome. It localises to the centriole. Its subcellular location is the spindle pole. The protein resides in the midbody. Functionally, centriole-enriched microtubule-binding protein involved in centriole biogenesis. In collaboration with CEP295 and POC1B, is required for the centriole-to-centrosome conversion by ensuring the formation of bona fide centriole wall. Functions as a linker component that maintains centrosome cohesion. Associates with CROCC and regulates its stability and localization to the centrosome. The polypeptide is Centrosomal protein of 44 kDa (CEP44) (Bos taurus (Bovine)).